Consider the following 191-residue polypeptide: Glucose-6-phosphate 1-dehydrogenase (191 aa).

Ala-2 carries the N-acetylalanine modification. The residue at position 8 (Ser-8) is a Phosphoserine. Phosphothreonine is present on Thr-10. NADP(+) contacts are provided by residues 38–45 and Tyr-86; that span reads GASGDLAK. Asp-101 is a D-glucose 6-phosphate binding site. The Proton acceptor role is filled by His-106. Residue Arg-163 participates in NADP(+) binding. Lys-173 is modified (N6-acetyllysine). NADP(+)-binding residues include Tyr-179 and Trp-185. A Phosphotyrosine modification is found at Tyr-179.

It belongs to the glucose-6-phosphate dehydrogenase family. As to quaternary structure, homotetramer; dimer of dimers. Interacts with SIRT2; the interaction is enhanced by H(2)O(2) treatment. Forms a ternary complex with ALDOB and TP53; this interaction is direct. ALDOB stabilizes the complex inhibiting G6PD activity and keeping oxidative pentose phosphate metabolism in check. Acetylated by ELP3; acetylation inhibits its homodimerization and enzyme activity. Deacetylated by SIRT2; deacetylation stimulates its enzyme activity.

It is found in the cytoplasm. It localises to the cytosol. The protein resides in the membrane. The catalysed reaction is D-glucose 6-phosphate + NADP(+) = 6-phospho-D-glucono-1,5-lactone + NADPH + H(+). It participates in carbohydrate degradation; pentose phosphate pathway; D-ribulose 5-phosphate from D-glucose 6-phosphate (oxidative stage): step 1/3. In terms of biological role, cytosolic glucose-6-phosphate dehydrogenase that catalyzes the first and rate-limiting step of the oxidative branch within the pentose phosphate pathway/shunt, an alternative route to glycolysis for the dissimilation of carbohydrates and a major source of reducing power and metabolic intermediates for fatty acid and nucleic acid biosynthetic processes. The chain is Glucose-6-phosphate 1-dehydrogenase (G6PD) from Didelphis virginiana (North American opossum).